Consider the following 289-residue polypeptide: MQVFPPPQVPLLGAHTSTSGGLQNAIYEGQEIGASTVQMFTANQRQWRRRPLTDDLINSFKTALEETSLSYIMSHAGYLINPGAPNPEILEKSRICIQQEIQDCLSLGITFVNFHPGAAVNDTKEACLDRIVSSFSLVEPLFEDSPPLVVLFETTAGQGTLVGSTFEELGYLIDKLKHKIPVGVCIDTCHIFASGYDITSPGSWKQVLKNFDDAIGLSYLRAFHLNDSMFPLGKHKDRHAPLGEGDIGMESFKFLMTDELTRMIPKYLETPGGPDLWTKEIRQLKSFQK.

Zn(2+) contacts are provided by His75, His115, Glu153, Asp187, His190, His224, Asp237, His239, and Glu269.

This sequence belongs to the AP endonuclease 2 family. Requires Zn(2+) as cofactor.

It carries out the reaction Endonucleolytic cleavage to 5'-phosphooligonucleotide end-products.. Functionally, endonuclease IV plays a role in DNA repair. It cleaves phosphodiester bonds at apurinic or apyrimidinic (AP) sites, generating a 3'-hydroxyl group and a 5'-terminal sugar phosphate. The chain is Probable endonuclease 4 from Chlamydia abortus (strain DSM 27085 / S26/3) (Chlamydophila abortus).